Reading from the N-terminus, the 53-residue chain is Sec-independent protein translocase protein TatA (53 aa).

The chain crosses the membrane as a helical span at residues 1 to 21 (MGMSFSHLLIVLLIIFVLFGA).

This sequence belongs to the TatA/E family. As to quaternary structure, the Tat system comprises two distinct complexes: a TatABC complex, containing multiple copies of TatA, TatB and TatC subunits, and a separate TatA complex, containing only TatA subunits. Substrates initially bind to the TatABC complex, which probably triggers association of the separate TatA complex to form the active translocon.

Its subcellular location is the cell inner membrane. Its function is as follows. Part of the twin-arginine translocation (Tat) system that transports large folded proteins containing a characteristic twin-arginine motif in their signal peptide across membranes. TatA could form the protein-conducting channel of the Tat system. This is Sec-independent protein translocase protein TatA from Rickettsia rickettsii (strain Iowa).